A 328-amino-acid chain; its full sequence is tRNA uridine(34) hydroxylase (328 aa).

The region spanning 130–224 is the Rhodanese domain; the sequence is LDEDTVVLDT…YGKDPEVQGE (95 aa). Cysteine 184 functions as the Cysteine persulfide intermediate in the catalytic mechanism.

Belongs to the TrhO family.

It carries out the reaction uridine(34) in tRNA + AH2 + O2 = 5-hydroxyuridine(34) in tRNA + A + H2O. Catalyzes oxygen-dependent 5-hydroxyuridine (ho5U) modification at position 34 in tRNAs. This chain is tRNA uridine(34) hydroxylase, found in Streptococcus agalactiae serotype Ia (strain ATCC 27591 / A909 / CDC SS700).